A 288-amino-acid chain; its full sequence is 33 kDa chaperonin (288 aa).

Disulfide bonds link Cys-233-Cys-235 and Cys-267-Cys-270.

The protein belongs to the HSP33 family. Under oxidizing conditions two disulfide bonds are formed involving the reactive cysteines. Under reducing conditions zinc is bound to the reactive cysteines and the protein is inactive.

Its subcellular location is the cytoplasm. In terms of biological role, redox regulated molecular chaperone. Protects both thermally unfolding and oxidatively damaged proteins from irreversible aggregation. Plays an important role in the bacterial defense system toward oxidative stress. This Pasteurella multocida (strain Pm70) protein is 33 kDa chaperonin.